A 261-amino-acid polypeptide reads, in one-letter code: Short-chain dehydrogenase/reductase ARMGADRAFT_1018421 (261 aa).

NADP(+) contacts are provided by isoleucine 21, aspartate 68, asparagine 95, lysine 128, tyrosine 161, lysine 165, valine 194, and threonine 196. Tyrosine 161 serves as the catalytic Proton acceptor. Lysine 165 functions as the Lowers pKa of active site Tyr in the catalytic mechanism.

This sequence belongs to the short-chain dehydrogenases/reductases (SDR) family.

It functions in the pathway secondary metabolite biosynthesis. Functionally, short-chain dehydrogenase/reductase, part of the gene cluster that mediates the biosynthesis of melleolides, a range of antifungal and phytotoxic polyketide derivatives composed of an orsellinic acid (OA) moiety esterified to various sesquiterpene alcohols. The first step in melleolides biosynthesis is performed by the delta(6)-protoilludene synthase PRO1 which catalyzes the cyclization of farnesyl diphosphate to protoilludene. The orsellinic acid synthase armB produces OA by condensing acetyl-CoA with 3 malonyl-CoA units in a three-round chain elongation reaction folowed by a C2-C7 ring closure. ArmB further catalyzes the trans-esterification of OA to the various sesquiterpene alcohols resulting from the hydroxylation of protoilludene. The melleolides cluster also includes 5 cytochrome P450 monooxygenases, 4 NAD(+)-dependent oxidoreductases, one flavin-dependent oxidoreductase, and one O-methyltransferase. The cytochrome P450 monooxygenases may be involved in protoilludene hydroxylation to elaborate melleolides with multiple alcohol groups, such as melleolide D, which carries alcohol functionalities at C-4, C-5, C-10, and C-13. The role of the NAD(+)-dependent enzymes remains unknown. Numerous melleolides, including arnamial, show 5'-O-methylation of the aromatic moiety which may be catalyzed by the methyltransferase encoded in the cluster. The flavin-dependent oxidoreductase might represent the dehydrogenase yielding the aldehyde in position 1 of arnamial and other melleolides. Finally, several halogenase localized outside of the cluster, are able to catalyze the transfer of a single chlorine atom to the melleolide backbone, resulting in a 6'-chloromelleolide product. The sequence is that of Short-chain dehydrogenase/reductase ARMGADRAFT_1018421 from Armillaria gallica (Bulbous honey fungus).